Reading from the N-terminus, the 69-residue chain is Photosystem I reaction center subunit IV (69 aa).

This sequence belongs to the PsaE family.

It localises to the cellular thylakoid membrane. In terms of biological role, stabilizes the interaction between PsaC and the PSI core, assists the docking of the ferredoxin to PSI and interacts with ferredoxin-NADP oxidoreductase. The protein is Photosystem I reaction center subunit IV of Prochlorococcus marinus (strain MIT 9515).